The following is a 282-amino-acid chain: Probable aquaporin PIP2-6 (282 aa).

Helical transmembrane passes span 39–59 (ALIA…ATVI) and 76–96 (LGIA…TAGI). The NPA 1 motif lies at 102 to 104 (NPA). The next 3 membrane-spanning stretches (helical) occupy residues 121–141 (VMYI…VKGI), 163–183 (GTAL…VFSA), and 197–217 (VLAP…TIPI). Positions 223 to 225 (NPA) match the NPA 2 motif. A helical transmembrane segment spans residues 245 to 265 (IFWAGPFIGALAAAAYHQYIL).

It belongs to the MIP/aquaporin (TC 1.A.8) family. PIP (TC 1.A.8.11) subfamily. In terms of tissue distribution, expressed in roots and leaves.

It localises to the cell membrane. In terms of biological role, aquaporins facilitate the transport of water and small neutral solutes across cell membranes. The chain is Probable aquaporin PIP2-6 (PIP2-6) from Oryza sativa subsp. japonica (Rice).